Consider the following 505-residue polypeptide: E3 SUMO-protein ligase PIAS4-A (505 aa).

In terms of domain architecture, SAP spans valine 12–valine 46. Residues leucine 20–leucine 24 carry the LXXLL motif motif. Lysine 35 participates in a covalent cross-link: Glycyl lysine isopeptide (Lys-Gly) (interchain with G-Cter in SUMO); alternate. Lysine 35 is covalently cross-linked (Glycyl lysine isopeptide (Lys-Gly) (interchain with G-Cter in SUMO2); alternate). Residues lysine 56 and lysine 68 each participate in a glycyl lysine isopeptide (Lys-Gly) (interchain with G-Cter in SUMO2) cross-link. A PINIT domain is found at glycine 104–phenylalanine 264. The segment at proline 296 to glutamate 381 adopts an SP-RING-type zinc-finger fold. 4 residues coordinate Zn(2+): cysteine 327, histidine 329, cysteine 350, and cysteine 353. The tract at residues glutamate 374–tyrosine 505 is required for nuclear localization. Basic and acidic residues predominate over residues aspartate 395 to arginine 407. The interval aspartate 395–tyrosine 505 is disordered. The span at serine 437 to threonine 457 shows a compositional bias: gly residues. Residues threonine 462–glutamine 485 are compositionally biased toward acidic residues. Residues glycine 493–tyrosine 505 show a composition bias toward basic and acidic residues.

The protein belongs to the PIAS family. In terms of processing, sumoylated. Lys-35 is the main site of sumoylation. In terms of tissue distribution, highly expressed in spleen, liver, and brain. Expressed at lower levels in heart, intestine, kidney, gill, skin, and muscle.

The protein localises to the nucleus. It catalyses the reaction S-ubiquitinyl-[E2 ubiquitin-conjugating enzyme]-L-cysteine + [acceptor protein]-L-lysine = [E2 ubiquitin-conjugating enzyme]-L-cysteine + N(6)-ubiquitinyl-[acceptor protein]-L-lysine.. It functions in the pathway protein modification; protein sumoylation. Functionally, functions as an E3-type small ubiquitin-like modifier (SUMO) ligase. May play a role as a transcriptional coregulator in various cellular pathways. Catalyzes conjugation of SUMO2 to KAT5 in response to DNA damage, facilitating repair of DNA double-strand breaks (DSBs) via homologous recombination (HR). Mediates sumoylation of PARP1 in response to PARP1 trapping to chromatin. Negatively regulates induction of interferon phi 1 (ifnphi1) mediated by mavs and ticam1/trif. Also inhibits ifnphi1-mediated activation of the interferon-stimulated genes (ISGs) pkz and cd40, and to a lesser extent rsad2 and isg15. May inhibit ticam1/trif-mediated activation of NF-kappa-B. This chain is E3 SUMO-protein ligase PIAS4-A, found in Danio rerio (Zebrafish).